We begin with the raw amino-acid sequence, 448 residues long: Phosphoglucosamine mutase (448 aa).

Ser-101 acts as the Phosphoserine intermediate in catalysis. Mg(2+) contacts are provided by Ser-101, Asp-241, Asp-243, and Asp-245. Ser-101 is modified (phosphoserine).

This sequence belongs to the phosphohexose mutase family. It depends on Mg(2+) as a cofactor. Activated by phosphorylation.

The enzyme catalyses alpha-D-glucosamine 1-phosphate = D-glucosamine 6-phosphate. In terms of biological role, catalyzes the conversion of glucosamine-6-phosphate to glucosamine-1-phosphate. The sequence is that of Phosphoglucosamine mutase from Macrococcus caseolyticus (strain JCSC5402) (Macrococcoides caseolyticum).